Reading from the N-terminus, the 229-residue chain is Large ribosomal subunit protein uL1 (229 aa).

It belongs to the universal ribosomal protein uL1 family. As to quaternary structure, part of the 50S ribosomal subunit.

Its function is as follows. Binds directly to 23S rRNA. The L1 stalk is quite mobile in the ribosome, and is involved in E site tRNA release. Functionally, protein L1 is also a translational repressor protein, it controls the translation of the L11 operon by binding to its mRNA. The chain is Large ribosomal subunit protein uL1 from Streptococcus equi subsp. zooepidemicus (strain MGCS10565).